Here is a 137-residue protein sequence, read N- to C-terminus: Large ribosomal subunit protein uL16 (137 aa).

Belongs to the universal ribosomal protein uL16 family. In terms of assembly, part of the 50S ribosomal subunit.

In terms of biological role, binds 23S rRNA and is also seen to make contacts with the A and possibly P site tRNAs. The polypeptide is Large ribosomal subunit protein uL16 (Ruegeria pomeroyi (strain ATCC 700808 / DSM 15171 / DSS-3) (Silicibacter pomeroyi)).